The sequence spans 433 residues: Probable beta-1,3-galactosyl-O-glycosyl-glycoprotein beta-1,6-N-acetylglucosaminyltransferase 7 (433 aa).

Over 1–8 (MSQLRTTK) the chain is Cytoplasmic. The chain crosses the membrane as a helical; Signal-anchor for type II membrane protein span at residues 9–25 (AGLVACGMICAFIFLYL). Topologically, residues 26–433 (RNPGPEEAEA…QSHFNSQPHH (408 aa)) are extracellular. 4 disulfide bridges follow: cysteine 57–cysteine 209, cysteine 143–cysteine 358, cysteine 164–cysteine 191, and cysteine 367–cysteine 398. Residue asparagine 112 is glycosylated (N-linked (GlcNAc...) asparagine). The segment at 233–275 (NITPGVTPPANSKPKTGQGPPKPSPDENSYTAPNTIFKQSPPH) is disordered. Polar residues predominate over residues 258–275 (DENSYTAPNTIFKQSPPH). The segment at 413–433 (VPPEPHWQFPQQSHFNSQPHH) is disordered. The span at 421-433 (FPQQSHFNSQPHH) shows a compositional bias: polar residues.

Belongs to the glycosyltransferase 14 family.

The protein localises to the golgi apparatus membrane. The protein operates within protein modification; protein glycosylation. Probable glycosyltransferase. This is Probable beta-1,3-galactosyl-O-glycosyl-glycoprotein beta-1,6-N-acetylglucosaminyltransferase 7 from Mus musculus (Mouse).